The following is a 348-amino-acid chain: Putative [LysW]-L-2-aminoadipate/[LysW]-L-glutamate phosphate reductase (348 aa).

9 to 12 (SGYV) provides a ligand contact to NADP(+). Cys149 is an active-site residue. Position 315 (Asn315) interacts with NADP(+).

The protein belongs to the NAGSA dehydrogenase family. Type 1 subfamily. LysY sub-subfamily.

The protein resides in the cytoplasm. It catalyses the reaction [amino-group carrier protein]-C-terminal-N-(1-carboxy-5-oxopentan-1-yl)-L-glutamine + phosphate + NADP(+) = [amino-group carrier protein]-C-terminal-N-(1-carboxy-5-phosphooxy-5-oxopentan-1-yl)-L-glutamine + NADPH + H(+). It carries out the reaction [amino-group carrier protein]-C-terminal-gamma-(L-glutamyl-5-semialdehyde)-L-glutamate + phosphate + NADP(+) = [amino-group carrier protein]-C-terminal-gamma-(5-phospho-L-glutamyl)-L-glutamate + NADPH + H(+). It participates in amino-acid biosynthesis; L-lysine biosynthesis via AAA pathway; L-lysine from L-alpha-aminoadipate (Thermus route): step 3/5. The protein operates within amino-acid biosynthesis; L-arginine biosynthesis. Involved in both the arginine and lysine biosynthetic pathways. The protein is Putative [LysW]-L-2-aminoadipate/[LysW]-L-glutamate phosphate reductase of Nitrosopumilus maritimus (strain SCM1).